Reading from the N-terminus, the 812-residue chain is Probable inorganic carbon transporter subunit DabA (812 aa).

C337, D339, H499, and C514 together coordinate Zn(2+).

It belongs to the inorganic carbon transporter (TC 9.A.2) DabA family. In terms of assembly, forms a complex with DabB. Requires Zn(2+) as cofactor.

The protein resides in the cell inner membrane. In terms of biological role, part of an energy-coupled inorganic carbon pump. The sequence is that of Probable inorganic carbon transporter subunit DabA from Xanthomonas oryzae pv. oryzae (strain KACC10331 / KXO85).